A 384-amino-acid polypeptide reads, in one-letter code: Substance-K receptor (384 aa).

Residues 1–32 (MGACVVMTDINISSGLDSNATGITAFSMPGWQ) lie on the Extracellular side of the membrane. 2 N-linked (GlcNAc...) asparagine glycosylation sites follow: Asn-11 and Asn-19. The helical transmembrane segment at 33-56 (LALWTAAYLALVLVAVMGNATVIW) threads the bilayer. Topologically, residues 57-69 (IILAHQRMRTVTN) are cytoplasmic. The chain crosses the membrane as a helical span at residues 70–90 (YFIVNLALADLCMAAFNAAFN). The Extracellular portion of the chain corresponds to 91-107 (FVYASHNIWYFGRAFCY). Residues Cys-106 and Cys-181 are joined by a disulfide bond. Residues 108 to 129 (FQNLFPITAMFVSIYSMTAIAA) form a helical membrane-spanning segment. Residues 130 to 149 (DRYMAIVHPFQPRLSAPGTR) are Cytoplasmic-facing. A helical membrane pass occupies residues 150–170 (AVIAGIWLVALALAFPQCFYS). Topologically, residues 171–196 (TITTDEGATKCVVAWPEDSGGKMLLL) are extracellular. Residues 197–218 (YHLIVIALIYFLPLVVMFVAYS) form a helical membrane-spanning segment. The Cytoplasmic segment spans residues 219–251 (VIGLTLWRRSVPGHQAHGANLRHLQAKKKFVKT). The chain crosses the membrane as a helical span at residues 252-272 (MVLVVVTFAICWLPYHLYFIL). Residues 273–290 (GTFQEDIYCHKFIQQVYL) are Extracellular-facing. The chain crosses the membrane as a helical span at residues 291–310 (ALFWLAMSSTMYNPIIYCCL). Topologically, residues 311 to 384 (NHRFRSGFRL…SPQAGVSTEP (74 aa)) are cytoplasmic. Cys-324 carries the S-palmitoyl cysteine lipid modification.

The protein belongs to the G-protein coupled receptor 1 family.

It localises to the cell membrane. This is a receptor for the tachykinin neuropeptide substance K (neurokinin A). It is associated with G proteins that activate a phosphatidylinositol-calcium second messenger system. The rank order of affinity of this receptor to tachykinins is: substance K &gt; neuromedin-K &gt; substance P. The polypeptide is Substance-K receptor (TACR2) (Bos taurus (Bovine)).